A 346-amino-acid chain; its full sequence is tRNA N6-adenosine threonylcarbamoyltransferase (346 aa).

Fe cation is bound by residues His-111 and His-115. Residues 134 to 138 (LVSGG), Asp-167, Gly-180, and Asn-279 contribute to the substrate site. Residue Asp-307 participates in Fe cation binding.

Belongs to the KAE1 / TsaD family. Requires Fe(2+) as cofactor.

The protein localises to the cytoplasm. It carries out the reaction L-threonylcarbamoyladenylate + adenosine(37) in tRNA = N(6)-L-threonylcarbamoyladenosine(37) in tRNA + AMP + H(+). Functionally, required for the formation of a threonylcarbamoyl group on adenosine at position 37 (t(6)A37) in tRNAs that read codons beginning with adenine. Is involved in the transfer of the threonylcarbamoyl moiety of threonylcarbamoyl-AMP (TC-AMP) to the N6 group of A37, together with TsaE and TsaB. TsaD likely plays a direct catalytic role in this reaction. This is tRNA N6-adenosine threonylcarbamoyltransferase from Burkholderia multivorans (strain ATCC 17616 / 249).